We begin with the raw amino-acid sequence, 266 residues long: Very-long-chain aldehyde decarbonylase GL1-11 (266 aa).

4 helical membrane-spanning segments follow: residues 25–45, 74–94, 106–126, and 163–183; these read VVTF…SLLF, ILYH…AFKF, WTVI…IFYW, and ILFL…HLFT. Residues 113–248 form the Fatty acid hydroxylase domain; sequence VLFYFVLEDF…FVYMDWLFGT (136 aa).

This sequence belongs to the sterol desaturase family. Homodimer.

It localises to the endoplasmic reticulum membrane. The enzyme catalyses a long-chain fatty aldehyde + 2 NADPH + O2 + H(+) = a long-chain alkane + formate + 2 NADP(+) + H2O. Functionally, aldehyde decarbonylase involved in the conversion of aldehydes to alkanes. Core component of a very-long-chain alkane synthesis complex. In Oryza sativa subsp. indica (Rice), this protein is Very-long-chain aldehyde decarbonylase GL1-11.